Consider the following 166-residue polypeptide: MAVTMFRAALRGWRTDVQRGCGLRLLSQTQGPPDYPSFVESVDEYQFVERLLPATRIPDPPKHEHYPTPSGWQPPRDPPPNLPYFVRRSRMHNVPVYKDITHGNRQMTVIRKVEGDIWALQKDVEDFLSPLLGKTPVTQVNEVTGTLRIKGYFDQELKAWLLEKGF.

The interval 56–78 (RIPDPPKHEHYPTPSGWQPPRDP) is disordered.

The protein belongs to the mitochondrion-specific ribosomal protein mL49 family. In terms of assembly, interacts with OXA1L.

Its subcellular location is the mitochondrion. This chain is Large ribosomal subunit protein mL49 (MRPL49), found in Macaca fascicularis (Crab-eating macaque).